Consider the following 391-residue polypeptide: MHTTYLKNLIGFESLTPQSNGAIEYIDDLLKEHGFKTEVKIFGETEQVTNLYAVYGNSKPNICFVGHVDVVPAGDPNLWHNSNPFKAHEQEGKIYGRGTVDMKGSIACFLAASLDFIKNNTDFVGSISFLLTSDEEGKAKHGTKEMLQYIYNQGHEIDFAIVGEPTCEKEIGDTIKIGRRGSINFKLAVKGLGGHVAYPQKANNPLPCLIRILNELTNIKLDKGTEFFQNSNLEVTNIDVDNNTTNVIPETATVHFNIRFNNLHSAETLAKQVEEIIKQHCQKHKLDYTLEYNSSADSFIQNPNDKIKEFATIVEKTLNIKPNFSTSGGTSDARFVKNYCPLVEFGLLSDTAHKINEYTKISDLQKLYDVYYNFLMETLNVTGSPPLLGMT.

Position 67 (His-67) interacts with Zn(2+). Asp-69 is a catalytic residue. Asp-101 is a binding site for Zn(2+). The Proton acceptor role is filled by Glu-135. Zn(2+)-binding residues include Glu-136, Glu-164, and His-353.

The protein belongs to the peptidase M20A family. DapE subfamily. In terms of assembly, homodimer. Zn(2+) serves as cofactor. The cofactor is Co(2+).

It catalyses the reaction N-succinyl-(2S,6S)-2,6-diaminopimelate + H2O = (2S,6S)-2,6-diaminopimelate + succinate. Its pathway is amino-acid biosynthesis; L-lysine biosynthesis via DAP pathway; LL-2,6-diaminopimelate from (S)-tetrahydrodipicolinate (succinylase route): step 3/3. Functionally, catalyzes the hydrolysis of N-succinyl-L,L-diaminopimelic acid (SDAP), forming succinate and LL-2,6-diaminopimelate (DAP), an intermediate involved in the bacterial biosynthesis of lysine and meso-diaminopimelic acid, an essential component of bacterial cell walls. In Rickettsia bellii (strain OSU 85-389), this protein is Succinyl-diaminopimelate desuccinylase.